Consider the following 72-residue polypeptide: Small ribosomal subunit protein bS18 (72 aa).

It belongs to the bacterial ribosomal protein bS18 family. As to quaternary structure, part of the 30S ribosomal subunit. Forms a tight heterodimer with protein bS6.

In terms of biological role, binds as a heterodimer with protein bS6 to the central domain of the 16S rRNA, where it helps stabilize the platform of the 30S subunit. In Fusobacterium nucleatum subsp. nucleatum (strain ATCC 25586 / DSM 15643 / BCRC 10681 / CIP 101130 / JCM 8532 / KCTC 2640 / LMG 13131 / VPI 4355), this protein is Small ribosomal subunit protein bS18.